We begin with the raw amino-acid sequence, 99 residues long: Prostate and testis expressed protein 14 (99 aa).

An N-terminal signal peptide occupies residues 1-21; it reads MGKNILLLLLGLSFVIGFLQA. In terms of domain architecture, UPAR/Ly6 spans 22-99; it reads LRCLECDMLN…CHDQSLCNEF (78 aa). 5 disulfides stabilise this stretch: Cys24–Cys51, Cys27–Cys36, Cys43–Cys69, Cys73–Cys89, and Cys90–Cys96. An N-linked (GlcNAc...) asparagine glycan is attached at Asn40. Residues Asn75 and Asn82 are each glycosylated (N-linked (GlcNAc...) asparagine).

Belongs to the PATE family. In terms of assembly, monomer.

It is found in the secreted. The protein is Prostate and testis expressed protein 14 of Rattus norvegicus (Rat).